The primary structure comprises 129 residues: uncharacterized protein (129 aa).

Positions 3–109 constitute an HIT domain; the sequence is IFCKIINGEI…IPRYEGDGEV (107 aa). The short motif at 94-98 is the Histidine triad motif element; sequence HVHFH.

This is an uncharacterized protein from Methanocaldococcus jannaschii (strain ATCC 43067 / DSM 2661 / JAL-1 / JCM 10045 / NBRC 100440) (Methanococcus jannaschii).